The primary structure comprises 125 residues: Homeobox protein HD-8 (125 aa).

Positions 30–89 (EPDTRTRKTTFQMMVLKEVFKIAPHPSTLTKADLALMIKLPLKAVQIWFQNERSRKERGG) form a DNA-binding region, homeobox.

Its subcellular location is the nucleus. The protein is Homeobox protein HD-8 (HD-8) of Encephalitozoon cuniculi (strain GB-M1) (Microsporidian parasite).